We begin with the raw amino-acid sequence, 155 residues long: Large ribosomal subunit protein uL16 (155 aa).

Belongs to the universal ribosomal protein uL16 family. Part of the 50S ribosomal subunit.

Binds 23S rRNA and is also seen to make contacts with the A and possibly P site tRNAs. In Synechococcus sp. (strain CC9311), this protein is Large ribosomal subunit protein uL16.